Consider the following 379-residue polypeptide: GDSL esterase/lipase EXL2 (379 aa).

Residues 1–35 (MKRNSINIHHVTSFSSSPFWCVFFLVLLCKTSTNA) form the signal peptide. An N-linked (GlcNAc...) asparagine glycan is attached at N42. Catalysis depends on S54, which acts as the Nucleophile. Catalysis depends on residues D358 and H361.

This sequence belongs to the 'GDSL' lipolytic enzyme family.

The protein resides in the secreted. This Arabidopsis thaliana (Mouse-ear cress) protein is GDSL esterase/lipase EXL2 (EXL2).